The following is a 196-amino-acid chain: Transmembrane protein 52 (196 aa).

An N-terminal signal peptide occupies residues 1-28; the sequence is MAPGPSATQGILLLLPLLPLSQVTLGSA. The chain crosses the membrane as a helical span at residues 47-67; sequence LWHVGLILLAILLMLLCGVTA. The disordered stretch occupies residues 162 to 196; it reads EEVAAPSEKTNSLPEALEPETTGGPQEPGPSAQRP.

It is found in the membrane. This chain is Transmembrane protein 52 (Tmem52), found in Mus musculus (Mouse).